The primary structure comprises 95 residues: Protein TusB (95 aa).

The protein belongs to the DsrH/TusB family. As to quaternary structure, heterohexamer, formed by a dimer of trimers. The hexameric TusBCD complex contains 2 copies each of TusB, TusC and TusD. The TusBCD complex interacts with TusE.

It localises to the cytoplasm. Functionally, part of a sulfur-relay system required for 2-thiolation of 5-methylaminomethyl-2-thiouridine (mnm(5)s(2)U) at tRNA wobble positions. The sequence is that of Protein TusB from Escherichia coli O157:H7.